We begin with the raw amino-acid sequence, 650 residues long: Chaperone protein HtpG (650 aa).

The segment at 1-349 (MSKTVKKFET…SSDLPLNVSR (349 aa)) is a; substrate-binding. The interval 350–566 (EILQEDVQIK…EHGLNANMER (217 aa)) is b. Residues 567 to 650 (ILRAMNQTVP…VADGKAAAGE (84 aa)) form a c region.

The protein belongs to the heat shock protein 90 family. In terms of assembly, homodimer.

The protein localises to the cytoplasm. Its function is as follows. Molecular chaperone. Has ATPase activity. This is Chaperone protein HtpG from Geobacter sulfurreducens (strain ATCC 51573 / DSM 12127 / PCA).